We begin with the raw amino-acid sequence, 196 residues long: Large ribosomal subunit protein uL5 (196 aa).

The protein belongs to the universal ribosomal protein uL5 family. In terms of assembly, part of the 50S ribosomal subunit; part of the 5S rRNA/L5/L18/L25 subcomplex. Contacts the 5S rRNA and the P site tRNA. Forms a bridge to the 30S subunit in the 70S ribosome.

This is one of the proteins that bind and probably mediate the attachment of the 5S RNA into the large ribosomal subunit, where it forms part of the central protuberance. In the 70S ribosome it contacts protein S13 of the 30S subunit (bridge B1b), connecting the 2 subunits; this bridge is implicated in subunit movement. Contacts the P site tRNA; the 5S rRNA and some of its associated proteins might help stabilize positioning of ribosome-bound tRNAs. The sequence is that of Large ribosomal subunit protein uL5 from Acidothermus cellulolyticus (strain ATCC 43068 / DSM 8971 / 11B).